The following is a 213-amino-acid chain: Translation initiation factor IF-3 (213 aa).

Residues E193–E213 are disordered.

This sequence belongs to the IF-3 family. In terms of assembly, monomer.

Its subcellular location is the cytoplasm. Functionally, IF-3 binds to the 30S ribosomal subunit and shifts the equilibrium between 70S ribosomes and their 50S and 30S subunits in favor of the free subunits, thus enhancing the availability of 30S subunits on which protein synthesis initiation begins. This chain is Translation initiation factor IF-3, found in Chlorobaculum tepidum (strain ATCC 49652 / DSM 12025 / NBRC 103806 / TLS) (Chlorobium tepidum).